The primary structure comprises 147 residues: Protein SPMIP3 (147 aa).

The protein is Protein SPMIP3 of Homo sapiens (Human).